A 316-amino-acid chain; its full sequence is Pantothenate kinase (316 aa).

Position 95 to 102 (95 to 102) interacts with ATP; that stretch reads GSVSVGKS.

This sequence belongs to the prokaryotic pantothenate kinase family.

The protein resides in the cytoplasm. The catalysed reaction is (R)-pantothenate + ATP = (R)-4'-phosphopantothenate + ADP + H(+). Its pathway is cofactor biosynthesis; coenzyme A biosynthesis; CoA from (R)-pantothenate: step 1/5. In Actinobacillus pleuropneumoniae serotype 7 (strain AP76), this protein is Pantothenate kinase.